The chain runs to 399 residues: Probable WRKY transcription factor 48 (399 aa).

Composition is skewed to basic and acidic residues over residues 1–11 and 19–38; these read MEKKKEEDHHH and KEIKNTETKIEQEQEQEQKQ. Disordered stretches follow at residues 1-57 and 138-202; these read MEKK…TSSD and AESS…KNQK. Low complexity predominate over residues 143–161; sequence VVNTTPTSPNSTSVSSSSN. Residues 162-171 are compositionally biased toward polar residues; sequence EAANDNNSGK. The segment covering 184 to 193 has biased composition (low complexity); that stretch reads QQEQKGTKPQ. The segment at residues 215–280 is a DNA-binding region (WRKY); that stretch reads SDIDNLDDGY…YEGQHTHPFP (66 aa). A disordered region spans residues 361–399; sequence QASTSTSSSIRDHGLLQDILPSQIRSDTINTQTNEENKK. A compositionally biased stretch (polar residues) spans 383–399; the sequence is QIRSDTINTQTNEENKK.

Its subcellular location is the nucleus. Transcription factor. Interacts specifically with the W box (5'-(T)TGAC[CT]-3'), a frequently occurring elicitor-responsive cis-acting element. The polypeptide is Probable WRKY transcription factor 48 (WRKY48) (Arabidopsis thaliana (Mouse-ear cress)).